A 342-amino-acid polypeptide reads, in one-letter code: Lipase B (342 aa).

The N-terminal stretch at 1–18 is a signal peptide; that stretch reads MKLLSLTGVAGVLATCVA. Positions 19–25 are excised as a propeptide; that stretch reads ATPLVKR. A disulfide bridge connects residues Cys-47 and Cys-89. Asn-99 is a glycosylation site (N-linked (GlcNAc...) asparagine). Active-site residues include Ser-130, Asp-212, and His-249. Disulfide bonds link Cys-241–Cys-283 and Cys-318–Cys-336.

It carries out the reaction a triacylglycerol + H2O = a diacylglycerol + a fatty acid + H(+). Hydrolysis of triglycerides. Is very stereospecific both in hydrolysis and in organic synthesis and has a potentially important application in glucolipid synthesis. This Pseudozyma antarctica (Yeast) protein is Lipase B.